A 112-amino-acid polypeptide reads, in one-letter code: Protein Churchill (112 aa).

Zn(2+)-binding residues include cysteine 2, cysteine 5, cysteine 30, cysteine 33, histidine 59, cysteine 61, cysteine 64, histidine 66, histidine 71, cysteine 88, and cysteine 91.

This sequence belongs to the Churchill family.

In terms of biological role, transcriptional activator that mediates FGF signaling during neural development. Plays a role in the regulation of cell movement. Does not bind DNA by itself. The chain is Protein Churchill (CHURC1) from Homo sapiens (Human).